Reading from the N-terminus, the 661-residue chain is DNA ligase (661 aa).

NAD(+) contacts are provided by residues 31–35, 80–81, and Glu109; these read DSGYD and SL. Residue Lys111 is the N6-AMP-lysine intermediate of the active site. NAD(+) is bound by residues Arg132, Glu167, Lys283, and Lys307. Positions 401, 404, 419, and 424 each coordinate Zn(2+). The BRCT domain maps to 582–661; sequence AGEQLLQGKT…AGFLNLLGLS (80 aa).

Belongs to the NAD-dependent DNA ligase family. LigA subfamily. The cofactor is Mg(2+). Requires Mn(2+) as cofactor.

The enzyme catalyses NAD(+) + (deoxyribonucleotide)n-3'-hydroxyl + 5'-phospho-(deoxyribonucleotide)m = (deoxyribonucleotide)n+m + AMP + beta-nicotinamide D-nucleotide.. DNA ligase that catalyzes the formation of phosphodiester linkages between 5'-phosphoryl and 3'-hydroxyl groups in double-stranded DNA using NAD as a coenzyme and as the energy source for the reaction. It is essential for DNA replication and repair of damaged DNA. The protein is DNA ligase of Syntrophomonas wolfei subsp. wolfei (strain DSM 2245B / Goettingen).